The chain runs to 82 residues: uncharacterized protein (82 aa).

The 2Fe-2S ferredoxin-type domain maps to 1–82; the sequence is MKIHLIRHNT…HVESDIEIDL (82 aa). [2Fe-2S] cluster is bound by residues cysteine 35, cysteine 40, cysteine 43, and cysteine 72.

[2Fe-2S] cluster serves as cofactor.

This is an uncharacterized protein from Haemophilus influenzae (strain ATCC 51907 / DSM 11121 / KW20 / Rd).